We begin with the raw amino-acid sequence, 318 residues long: Apo-salmochelin esterase (318 aa).

A helical membrane pass occupies residues 13 to 32 (KAIFFHLSCLTLICSAQVYA). Active-site residues include Ser-189 and His-287.

It belongs to the esterase D family. As to quaternary structure, monomer.

It is found in the cell inner membrane. It carries out the reaction enterobactin + H2O = N-(2,3-dihydroxybenzoyl)-L-serine trimer. It catalyses the reaction monoglucosyl-enterobactin + H2O = [N-(2,3-dihydroxybenzoyl)-L-seryl]2-N-(C-5-[deoxy-beta-D-glucosyl]-2,3-dihydroxybenzoyl)-L-serine + H(+). The catalysed reaction is diglucosyl-enterobactin + H2O = N-(2,3-dihydroxybenzoyl)-L-seryl-[N-(C-5-[deoxy-beta-D-glucosyl]-2,3-dihydroxybenzoyl)-L-serine]2 + H(+). The enzyme catalyses triglucosyl-enterobactin + H2O = [N-(C-5-[deoxy-beta-D-glucosyl]-2,3-dihydroxybenzoyl)-L-serine]3 + H(+). Functionally, catalyzes the hydrolysis of both the apo and Fe3(+)-bound forms of enterobactin (Ent), monoglucosyl-C-Ent (MGE), diglucosyl-C-Ent (DGE) and triglucosyl-C-Ent (TGE). It prefers apo siderophores as substrates and hydrolyzes the Fe3(+)-bound siderophores very inefficiently. Tends to hydrolyze the trilactone just once to produce linearized trimers. May hydrolyze and linearize some or all of apo enterobactins while they are being exported. The sequence is that of Apo-salmochelin esterase from Escherichia coli O6:H1 (strain CFT073 / ATCC 700928 / UPEC).